Here is a 196-residue protein sequence, read N- to C-terminus: MSITVYLLIVFAYLLGSVSSAIIFCRLAGLPDPRENGSHNPGATNVLRIGGKFSALGVLLFDILKGGLPVLLAFNFKLEPSEIGLIALAACLGHIFPLFFRFRGGKGVATAFGALLSISFAASAAGLCTWLIVFLLFGYSSLSAVITALIMPFYIWWFLPEFTFPVALVCCLLVYRHHDNIQRLWRGQEQPMWARK.

Transmembrane regions (helical) follow at residues 5–25 (VYLL…IIFC), 53–73 (FSAL…VLLA), 80–100 (PSEI…PLFF), 107–127 (GVAT…AAGL), 130–150 (WLIV…TALI), and 153–173 (FYIW…CCLL).

This sequence belongs to the PlsY family. Probably interacts with PlsX.

The protein resides in the cell inner membrane. It catalyses the reaction an acyl phosphate + sn-glycerol 3-phosphate = a 1-acyl-sn-glycero-3-phosphate + phosphate. It functions in the pathway lipid metabolism; phospholipid metabolism. In terms of biological role, catalyzes the transfer of an acyl group from acyl-phosphate (acyl-PO(4)) to glycerol-3-phosphate (G3P) to form lysophosphatidic acid (LPA). This enzyme utilizes acyl-phosphate as fatty acyl donor, but not acyl-CoA or acyl-ACP. The protein is Glycerol-3-phosphate acyltransferase of Actinobacillus pleuropneumoniae serotype 7 (strain AP76).